Here is a 160-residue protein sequence, read N- to C-terminus: Nucleotide-binding protein Tgr7_1196 (160 aa).

It belongs to the YajQ family.

In terms of biological role, nucleotide-binding protein. The sequence is that of Nucleotide-binding protein Tgr7_1196 from Thioalkalivibrio sulfidiphilus (strain HL-EbGR7).